A 396-amino-acid chain; its full sequence is Small ribosomal subunit protein uS9m (396 aa).

The segment at 374-396 (PRVRERKKPGQEGARRKFTWKKR) is disordered.

It belongs to the universal ribosomal protein uS9 family. Component of the mitochondrial ribosome small subunit (28S) which comprises a 12S rRNA and about 30 distinct proteins.

It is found in the mitochondrion. The protein is Small ribosomal subunit protein uS9m (MRPS9) of Bos taurus (Bovine).